We begin with the raw amino-acid sequence, 934 residues long: Serine/threonine-protein kinase PknD (934 aa).

The region spanning 4 to 296 is the Protein kinase domain; that stretch reads YELIRLIGKG…ELRQALQPYL (293 aa). ATP contacts are provided by residues 10 to 18 and Lys-33; that span reads IGKGGMGEV. Asp-138 (proton acceptor) is an active-site residue.

It belongs to the protein kinase superfamily. Ser/Thr protein kinase family. In terms of processing, autophosphorylated on serine and threonine residues.

The catalysed reaction is L-seryl-[protein] + ATP = O-phospho-L-seryl-[protein] + ADP + H(+). It catalyses the reaction L-threonyl-[protein] + ATP = O-phospho-L-threonyl-[protein] + ADP + H(+). In terms of biological role, together with the serine/threonine kinase Pkn1, may play a role in the specific interactions with host proteins during intracellular growth. The polypeptide is Serine/threonine-protein kinase PknD (Chlamydia trachomatis serovar A (strain ATCC VR-571B / DSM 19440 / HAR-13)).